Consider the following 398-residue polypeptide: Succinate--CoA ligase [ADP-forming] subunit beta (398 aa).

Residues 9–253 (KQVLAKYGVA…ESEEDPAELE (245 aa)) form the ATP-grasp domain. ATP is bound by residues lysine 46, 53–55 (GRG), glutamate 108, cysteine 111, and glutamate 116. Positions 208 and 222 each coordinate Mg(2+). Substrate-binding positions include asparagine 273 and 330–332 (GIM).

It belongs to the succinate/malate CoA ligase beta subunit family. In terms of assembly, heterotetramer of two alpha and two beta subunits. Requires Mg(2+) as cofactor.

The enzyme catalyses succinate + ATP + CoA = succinyl-CoA + ADP + phosphate. It carries out the reaction GTP + succinate + CoA = succinyl-CoA + GDP + phosphate. It functions in the pathway carbohydrate metabolism; tricarboxylic acid cycle; succinate from succinyl-CoA (ligase route): step 1/1. Functionally, succinyl-CoA synthetase functions in the citric acid cycle (TCA), coupling the hydrolysis of succinyl-CoA to the synthesis of either ATP or GTP and thus represents the only step of substrate-level phosphorylation in the TCA. The beta subunit provides nucleotide specificity of the enzyme and binds the substrate succinate, while the binding sites for coenzyme A and phosphate are found in the alpha subunit. The sequence is that of Succinate--CoA ligase [ADP-forming] subunit beta from Paramagnetospirillum magneticum (strain ATCC 700264 / AMB-1) (Magnetospirillum magneticum).